A 310-amino-acid chain; its full sequence is Protein FIP2 (310 aa).

Residues 1–58 form a disordered region; the sequence is MGFAPVTPAAVETYDPDVDHDDESNGLDGFRVRSKRSGKFSGGYSDSPREVGDGYGVR. The segment covering 14-25 has biased composition (acidic residues); the sequence is YDPDVDHDDESN. 2 positions are modified to phosphoserine: Ser77 and Ser105. 3 disordered regions span residues 115–135, 152–171, and 177–221; these read ATRL…GSGG, FKPK…LDYD, and DRAE…GSSS. Residues 208 to 221 are compositionally biased toward polar residues; that stretch reads PRNTGASNGYGSSS.

As to quaternary structure, interacts with FRI. Interacts with WAV3.

This chain is Protein FIP2, found in Arabidopsis thaliana (Mouse-ear cress).